A 165-amino-acid chain; its full sequence is UPF0303 protein Bxeno_A1932 (165 aa).

The protein belongs to the UPF0303 family.

The chain is UPF0303 protein Bxeno_A1932 from Paraburkholderia xenovorans (strain LB400).